The following is a 185-amino-acid chain: Ribosome-recycling factor (185 aa).

It belongs to the RRF family.

The protein resides in the cytoplasm. In terms of biological role, responsible for the release of ribosomes from messenger RNA at the termination of protein biosynthesis. May increase the efficiency of translation by recycling ribosomes from one round of translation to another. The sequence is that of Ribosome-recycling factor from Trichlorobacter lovleyi (strain ATCC BAA-1151 / DSM 17278 / SZ) (Geobacter lovleyi).